Reading from the N-terminus, the 947-residue chain is Protein NLP8 (947 aa).

3 disordered regions span residues 114–135 (RSSAQEMNSQFHRSSDSDELSG), 509–533 (STKKEGTKPGFRSSDMSNFPQTTSS), and 550–591 (SMFS…EKNV). Positions 126–135 (RSSDSDELSG) are enriched in basic and acidic residues. Polar residues-rich tracts occupy residues 522 to 533 (SDMSNFPQTTSS) and 550 to 572 (SMFSGMSSDKENSITVSQGTLEQ). The segment covering 573-587 (DVSKARTPEKKKSTT) has biased composition (basic and acidic residues). Positions 577–671 (ARTPEKKKST…LDSVQGVEGG (95 aa)) constitute an RWP-RK domain. Positions 646 to 666 (RKINKVNRSLRKIQTVLDSVQ) form a coiled coil. Residues 805-815 (SCSISDSSNGS) are compositionally biased toward low complexity. The disordered stretch occupies residues 805-828 (SCSISDSSNGSGAVLRGSSSTSME). In terms of domain architecture, PB1 spans 847–929 (TLIVKASYRE…HSVKFLVRDL (83 aa)).

The protein resides in the nucleus. In terms of biological role, probable transcription factor. The sequence is that of Protein NLP8 (NLP8) from Arabidopsis thaliana (Mouse-ear cress).